Here is a 446-residue protein sequence, read N- to C-terminus: Maltoporin (446 aa).

Residues Met-1 to Ala-25 form the signal peptide.

The protein belongs to the porin LamB (TC 1.B.3) family. As to quaternary structure, homotrimer formed of three 18-stranded antiparallel beta-barrels, containing three independent channels.

It localises to the cell outer membrane. The enzyme catalyses beta-maltose(in) = beta-maltose(out). Functionally, involved in the transport of maltose and maltodextrins. The chain is Maltoporin from Escherichia coli O6:K15:H31 (strain 536 / UPEC).